Here is a 462-residue protein sequence, read N- to C-terminus: ESX-1 secretion system protein EccE1 (462 aa).

Helical transmembrane passes span 9–29 and 34–54; these read FSTG…IAFL and WWAG…TFYG.

The protein belongs to the EccE family. Part of the ESX-1 / type VII secretion system (T7SS), which is composed of cytosolic and membrane components. The ESX-1 membrane complex is composed of EccB1, EccCa1, EccCb1, EccD1 and EccE1.

The protein localises to the cell inner membrane. Functionally, part of the ESX-1 specialized secretion system, which delivers several virulence factors to host cells during infection, including the key virulence factors EsxA (ESAT-6) and EsxB (CFP-10). In Mycobacterium tuberculosis (strain CDC 1551 / Oshkosh), this protein is ESX-1 secretion system protein EccE1.